Here is a 128-residue protein sequence, read N- to C-terminus: Large ribosomal subunit protein bL12 (128 aa).

This sequence belongs to the bacterial ribosomal protein bL12 family. In terms of assembly, homodimer. Part of the ribosomal stalk of the 50S ribosomal subunit. Forms a multimeric L10(L12)X complex, where L10 forms an elongated spine to which 2 to 4 L12 dimers bind in a sequential fashion. Binds GTP-bound translation factors.

Forms part of the ribosomal stalk which helps the ribosome interact with GTP-bound translation factors. Is thus essential for accurate translation. The protein is Large ribosomal subunit protein bL12 of Synechococcus sp. (strain CC9902).